We begin with the raw amino-acid sequence, 549 residues long: GPI mannosyltransferase 3 (549 aa).

Residues 1–39 (MAYNNSVRKRKKDIQDANGFHRDQTIDKKSRATNKLEES) are Cytoplasmic-facing. A helical membrane pass occupies residues 40–60 (LPTFKVFIVLFFIRLLNSLTI). The Lumenal portion of the chain corresponds to 61 to 119 (KTFFQADEYYQCLEPAYNFVFGSGYITWEWEEGIRSSIHPLIYALGYKMVSYVHFDDKP). The helical transmembrane segment at 120–140 (IILIPKVIGALIASIGEVYLY) threads the bilayer. Residues 141-154 (KFSKKFTKNEKLAR) lie on the Cytoplasmic side of the membrane. Residues 155-175 (LTLILSLLSPFNWYIITRSFS) form a helical membrane-spanning segment. The Lumenal segment spans residues 176-205 (NSFEMVLTTIAFTYWPWDNVISYKDISMSC). Residues 206–226 (IIAFISCIVRPTNGIIWLYLG) form a helical membrane-spanning segment. Topologically, residues 227-246 (INFMIKNYKLEKQSGKLMKL) are cytoplasmic. A helical membrane pass occupies residues 247-267 (ILILSIELILILLVNTGLDYI). Over 268 to 289 (FYGKTTFPLYNFVEFNVIRNLS) the chain is Lumenal. An N-linked (GlcNAc...) asparagine glycan is attached at Asn287. The chain crosses the membrane as a helical span at residues 290–310 (IFYGVAPWHFYLFQGVPIILM). Over 311–328 (TYLPWLLHSAIVLKKYKS) the chain is Cytoplasmic. A helical transmembrane segment spans residues 329-349 (LLGQVAILMIGGFSLIDHKEI). A topological domain (lumenal) is located at residue Arg350. Residues 351 to 367 (FIYPLQPIFMLMVAYSI) traverse the membrane as a helical segment. Topologically, residues 368 to 379 (HETKHKFQRLYK) are cytoplasmic. Residues 380 to 400 (FLVPVIIILNLIIAIFFTQVH) traverse the membrane as a helical segment. The Lumenal portion of the chain corresponds to 401 to 549 (ERGVIDIVQY…KGDIIVYCQI (149 aa)). Asn442 carries N-linked (GlcNAc...) asparagine glycosylation.

Belongs to the glycosyltransferase 22 family. PIGB subfamily.

Its subcellular location is the endoplasmic reticulum membrane. It functions in the pathway glycolipid biosynthesis; glycosylphosphatidylinositol-anchor biosynthesis. Mannosyltransferase involved in glycosylphosphatidylinositol-anchor biosynthesis. Transfers the third mannose to Man2-GlcN-acyl-PI during GPI precursor assembly. In Debaryomyces hansenii (strain ATCC 36239 / CBS 767 / BCRC 21394 / JCM 1990 / NBRC 0083 / IGC 2968) (Yeast), this protein is GPI mannosyltransferase 3 (GPI10).